A 45-amino-acid polypeptide reads, in one-letter code: Toxin Bcs III 15.09 (45 aa).

One can recognise an EGF-like domain in the interval 2–44; that stretch reads QGTACTGEHAHNFCLNGGTCRHIQSLGEYYCICPEGYTGHRCE. Intrachain disulfides connect cysteine 6/cysteine 21, cysteine 15/cysteine 32, and cysteine 34/cysteine 43.

The protein localises to the secreted. Its subcellular location is the nematocyst. Has both toxic and EGF activity. The chain is Toxin Bcs III 15.09 from Bunodosoma caissarum (Sea anemone).